Consider the following 201-residue polypeptide: Acireductone dioxygenase 2 (201 aa).

4 residues coordinate Fe(2+): H83, H85, E89, and H129. Ni(2+)-binding residues include H83, H85, E89, and H129.

This sequence belongs to the acireductone dioxygenase (ARD) family. It depends on Fe(2+) as a cofactor. The cofactor is Ni(2+).

The protein localises to the cytoplasm. Its subcellular location is the nucleus. The catalysed reaction is 1,2-dihydroxy-5-(methylsulfanyl)pent-1-en-3-one + O2 = 4-methylsulfanyl-2-oxobutanoate + formate + 2 H(+). The enzyme catalyses 1,2-dihydroxy-5-(methylsulfanyl)pent-1-en-3-one + O2 = 3-(methylsulfanyl)propanoate + CO + formate + 2 H(+). It functions in the pathway amino-acid biosynthesis; L-methionine biosynthesis via salvage pathway; L-methionine from S-methyl-5-thio-alpha-D-ribose 1-phosphate: step 5/6. Functionally, catalyzes 2 different reactions between oxygen and the acireductone 1,2-dihydroxy-3-keto-5-methylthiopentene (DHK-MTPene) depending upon the metal bound in the active site. Fe-containing acireductone dioxygenase (Fe-ARD) produces formate and 2-keto-4-methylthiobutyrate (KMTB), the alpha-ketoacid precursor of methionine in the methionine recycle pathway. Ni-containing acireductone dioxygenase (Ni-ARD) produces methylthiopropionate, carbon monoxide and formate, and does not lie on the methionine recycle pathway. This Coprinopsis cinerea (strain Okayama-7 / 130 / ATCC MYA-4618 / FGSC 9003) (Inky cap fungus) protein is Acireductone dioxygenase 2.